The following is a 414-amino-acid chain: 2,3-diketo-5-methylthiopentyl-1-phosphate enolase (414 aa).

Lys99 serves as the catalytic Proton acceptor. Substrate-binding positions include Lys148, 174-177, His265, Gly338, and 360-361; these read KDDE and GG. Residues Lys174, Asp176, and Glu177 each contribute to the Mg(2+) site. Lys174 carries the N6-carboxylysine modification.

Belongs to the RuBisCO large chain family. Type IV subfamily. As to quaternary structure, homodimer. Mg(2+) is required as a cofactor.

The enzyme catalyses 5-methylsulfanyl-2,3-dioxopentyl phosphate = 2-hydroxy-5-methylsulfanyl-3-oxopent-1-enyl phosphate. Its pathway is amino-acid biosynthesis; L-methionine biosynthesis via salvage pathway; L-methionine from S-methyl-5-thio-alpha-D-ribose 1-phosphate: step 3/6. Catalyzes the enolization of 2,3-diketo-5-methylthiopentyl-1-phosphate (DK-MTP-1-P) into 2-hydroxy-3-keto-5-methylthiopentenyl-1-phosphate (HK-MTPenyl-1-P). This chain is 2,3-diketo-5-methylthiopentyl-1-phosphate enolase, found in Bacillus mycoides (strain KBAB4) (Bacillus weihenstephanensis).